Consider the following 369-residue polypeptide: Cytochrome b561 and DOMON domain-containing protein At3g07570 (369 aa).

The first 22 residues, 1–22 (MKLYSVSIIIFVLIALSTIVNA), serve as a signal peptide directing secretion. One can recognise a DOMON domain in the interval 55–167 (QNFILRYART…PRQSLLYAVG (113 aa)). The Cytochrome b561 domain maps to 174–369 (SSPDFRLREH…GLEVRKFLKK (196 aa)). The chain crosses the membrane as a helical span at residues 212 to 232 (THGLMNMFGWGILIIVGAIVA). 2 residues coordinate heme b: histidine 213 and histidine 246. 2 helical membrane-spanning segments follow: residues 247–267 (IALQTTGFLLGLTGVICGLVL) and 279–299 (HKGLGITILVMGVLQMLALLA). Heme b is bound by residues histidine 279 and histidine 315. 2 helical membrane-spanning segments follow: residues 321 to 341 (LLIILAISNIFYGIHLAKAGT) and 343 to 363 (WNGGYGFAVAVLALTAIGLEV).

Requires heme b as cofactor.

Its subcellular location is the membrane. Its function is as follows. May act as a catecholamine-responsive trans-membrane electron transporter. The polypeptide is Cytochrome b561 and DOMON domain-containing protein At3g07570 (Arabidopsis thaliana (Mouse-ear cress)).